Here is a 260-residue protein sequence, read N- to C-terminus: MILDKIAASTKIRVENLKKEVSFSFVKSEASKLVNKSPFAFEKAVKDGELTFICEIKKASPSKGLISENFPYIDIAKDYEAAGAGAISVLTEPEFFLGSDQYLKDVKKTVSIPVLRKDFTIDPYQIYEAALIGADCVLLICALLDTDTLKEYIKIADGLGLSCLVEAHDENEVKSAIEAGSRIVGVNNRNLKTFEVDITNSIRLRELVPSDISFVSESGIRTAQDISALRRIGASAVLIGETLMRSGDTGAELAKLRGSA.

Belongs to the TrpC family.

The enzyme catalyses 1-(2-carboxyphenylamino)-1-deoxy-D-ribulose 5-phosphate + H(+) = (1S,2R)-1-C-(indol-3-yl)glycerol 3-phosphate + CO2 + H2O. The protein operates within amino-acid biosynthesis; L-tryptophan biosynthesis; L-tryptophan from chorismate: step 4/5. The polypeptide is Indole-3-glycerol phosphate synthase (Ruminiclostridium cellulolyticum (strain ATCC 35319 / DSM 5812 / JCM 6584 / H10) (Clostridium cellulolyticum)).